The following is a 338-amino-acid chain: UPF0324 membrane protein TauZ (338 aa).

A run of 10 helical transmembrane segments spans residues 12–31, 36–55, 75–92, 96–118, 125–147, 162–184, 191–213, 223–245, 258–280, and 315–337; these read IEAAFPGFAVSALVAATAQF, YGAPAMLLALLLGLALNFLA, LGVALLGARISAGMLAAL, AIALVAAGVVLTILFALAASRLV, ALLTGGSVAICGASAAMAIAAVL, LSVTVLSTVAMVLYPMLAGFFGF, VFLGGTIHDVAQVVGAGFSIGPE, LIRVSMLAPVVLCFSLAIRARGL, PGFVIGFLVLAALNSLGLVPAAV, and AIALILAETVFLAVFVTIGLHVL.

The protein belongs to the UPF0324 family.

The protein localises to the cell membrane. This Paracoccus denitrificans protein is UPF0324 membrane protein TauZ (tauZ).